We begin with the raw amino-acid sequence, 162 residues long: MFNKNFWTSIIIGCLFCTITYSGVNAAALDEETRTVALNSTETVVLTPEQVKRGKRLFNSTCGICHVGGITKTNPNVGLDSEALALATPPRNNIESLVDYMKNPTSYDGSEEIYDIHPSIRSADAFPKMRNLTEEDLYDIAGHILLSPKILPSQWGGGKIYY.

Residues 1–26 (MFNKNFWTSIIIGCLFCTITYSGVNA) form the signal peptide. Residues Cys62, Cys65, His66, and His117 each coordinate heme c.

The protein belongs to the cytochrome c family. PsbV subfamily. PSII is composed of 1 copy each of membrane proteins PsbA, PsbB, PsbC, PsbD, PsbE, PsbF, PsbH, PsbI, PsbJ, PsbK, PsbL, PsbM, PsbT, PsbX, PsbY, PsbZ, Psb30/Ycf12, at least 3 peripheral proteins of the oxygen-evolving complex and a large number of cofactors. It forms dimeric complexes. The cofactor is heme c.

The protein resides in the plastid. Its subcellular location is the cyanelle thylakoid membrane. In terms of biological role, one of the extrinsic, lumenal subunits of photosystem II (PSII). PSII is a light-driven water plastoquinone oxidoreductase, using light energy to abstract electrons from H(2)O, generating a proton gradient subsequently used for ATP formation. The extrinsic proteins stabilize the structure of photosystem II oxygen-evolving complex (OEC), the ion environment of oxygen evolution and protect the OEC against heat-induced inactivation. This is Photosystem II extrinsic protein V from Cyanophora paradoxa.